The sequence spans 423 residues: Deferrochelatase (423 aa).

Residues 1-35 (MQYEDENGVNEPSRRRLLKGIGALALAGSCPVAHA) constitute a signal peptide (tat-type signal). Heme b is bound by residues 236–238 (GTA), His-329, 334–336 (NPR), and Arg-347.

Belongs to the DyP-type peroxidase family. EfeB subfamily. As to quaternary structure, homodimer. Part of a ferrous iron transporter composed of EfeU, EfeO and EfeB. Requires heme b as cofactor. Predicted to be exported by the Tat system. The position of the signal peptide cleavage has not been experimentally proven.

Its subcellular location is the periplasm. It catalyses the reaction heme b + 2 H(+) = protoporphyrin IX + Fe(2+). Involved in the recovery of exogenous heme iron. Extracts iron from heme while preserving the protoporphyrin ring intact. The chain is Deferrochelatase (efeB) from Escherichia coli O6:H1 (strain CFT073 / ATCC 700928 / UPEC).